Consider the following 252-residue polypeptide: 3-dehydroquinate dehydratase (252 aa).

3-dehydroquinate-binding positions include 46 to 48 (EWR) and Arg82. His143 acts as the Proton donor/acceptor in catalysis. Lys170 (schiff-base intermediate with substrate) is an active-site residue. 3-dehydroquinate is bound by residues Arg212, Ser231, and Gln235.

Belongs to the type-I 3-dehydroquinase family. As to quaternary structure, homodimer.

The catalysed reaction is 3-dehydroquinate = 3-dehydroshikimate + H2O. Its pathway is metabolic intermediate biosynthesis; chorismate biosynthesis; chorismate from D-erythrose 4-phosphate and phosphoenolpyruvate: step 3/7. Involved in the third step of the chorismate pathway, which leads to the biosynthesis of aromatic amino acids. Catalyzes the cis-dehydration of 3-dehydroquinate (DHQ) and introduces the first double bond of the aromatic ring to yield 3-dehydroshikimate. In Listeria innocua serovar 6a (strain ATCC BAA-680 / CLIP 11262), this protein is 3-dehydroquinate dehydratase.